We begin with the raw amino-acid sequence, 221 residues long: GTP-binding nuclear protein Ran-3 (221 aa).

The Small GTPase Ran-type domain occupies 10-174; that stretch reads DYPSFKLVIV…LYLARKLAGD (165 aa). A GTP-binding site is contributed by 21-28; sequence DGGTGKTT. The interval 40-48 is switch-I; that stretch reads KKYEPTIGV. GTP-binding positions include Gly-71, 125–128, and 153–155; these read NKVD and SAK. Residues 71 to 87 are switch-II; the sequence is GQEKFGGLRDGYYIHGQ. The disordered stretch occupies residues 201 to 221; that stretch reads EAELAAAASQPLPDDDDDTFE.

It belongs to the small GTPase superfamily. Ran family. In terms of assembly, found in a nuclear export complex with RanGTP, exportin and pre-miRNA. Interacts with RanBP1a and RanBP1b. Interacts with KPNB1.

The protein localises to the nucleus. GTP-binding protein involved in nucleocytoplasmic transport. Required for the import of protein into the nucleus and also for RNA export. Involved in chromatin condensation and control of cell cycle. The protein is GTP-binding nuclear protein Ran-3 (RAN3) of Arabidopsis thaliana (Mouse-ear cress).